Consider the following 104-residue polypeptide: Probable monothiol glutaredoxin 2 (104 aa).

Residues 7-104 (FEFIENEIKN…NGELEKMLKG (98 aa)) enclose the Glutaredoxin domain. Position 24 (Lys-24) interacts with glutathione. Residue Cys-32 participates in [2Fe-2S] cluster binding. Residues Arg-61, Phe-73, and 86–87 (CD) each bind glutathione.

It belongs to the glutaredoxin family. Monothiol subfamily.

The polypeptide is Probable monothiol glutaredoxin 2 (grxC2) (Rickettsia felis (strain ATCC VR-1525 / URRWXCal2) (Rickettsia azadi)).